The chain runs to 483 residues: Probable 4-aminobutyrate aminotransferase, mitochondrial (483 aa).

148–149 (GT) lines the pyridoxal 5'-phosphate pocket. Arg-204 contacts substrate. The residue at position 341 (Lys-341) is an N6-(pyridoxal phosphate)lysine. Thr-365 serves as a coordination point for pyridoxal 5'-phosphate.

The protein belongs to the class-III pyridoxal-phosphate-dependent aminotransferase family. Homodimer. Pyridoxal 5'-phosphate serves as cofactor.

It is found in the mitochondrion matrix. It catalyses the reaction 4-aminobutanoate + 2-oxoglutarate = succinate semialdehyde + L-glutamate. It carries out the reaction (S)-3-amino-2-methylpropanoate + 2-oxoglutarate = 2-methyl-3-oxopropanoate + L-glutamate. The chain is Probable 4-aminobutyrate aminotransferase, mitochondrial (gta-1) from Caenorhabditis elegans.